The following is a 979-amino-acid chain: Pimaradiene synthase pbcA (979 aa).

Residues 34–39 (VYDTAW) carry the VYDTAW motif motif. The DXDD B-type cyclization motif signature appears at 328 to 331 (DADD). Residues D665, E669, N865, D866, S869, and D873 each contribute to the Mg(2+) site. Residues 665-669 (DEFME) carry the DEXXE A-type cyclization motif motif.

This sequence belongs to the terpene synthase family. The cofactor is Mg(2+).

It carries out the reaction (2E,6E,10E)-geranylgeranyl diphosphate = ent-copalyl diphosphate. It catalyses the reaction ent-copalyl diphosphate = ent-pimara-8(14),15-diene + diphosphate. It functions in the pathway secondary metabolite biosynthesis; terpenoid biosynthesis. In terms of biological role, bifunctional terpene synthase; part of the gene cluster that mediates the biosynthesis of the diterpene ent-pimara-8(14),15-diene (PD). Within the cluster, the HMG-CoA reductase AN1593 functions in the mevalonate pathway, which produces isoprenoid precursors. The geranylgeranyl pyrophosphate (GGPP) synthase AN1592 is needed in the formation of GGPP, the precursor for diterpenes. Lastly, the pimaradiene synthase pbcA performs the 2 cyclization steps that convert GGPP to ent-pimara-8(14),15-diene with ent-copalyl diphosphate as an intermediate. The putative roles of the remaining cluster enzymes in ent-pimara-8(14),15-diene biosynthesis is unclear. The cytochrome P450 monooxygenase AN1598, the glutathione S-transferase AN1595, the oxidoreductases AN1596 and AN1597 probably function as decorative enzymes. It is possible that in biological conditions the compound is oxidized to ent-pimara-8(14),15-dien-19-oic acid, which is a bioactive diterpene compound predominant in many plant extracts. The protein is Pimaradiene synthase pbcA of Emericella nidulans (strain FGSC A4 / ATCC 38163 / CBS 112.46 / NRRL 194 / M139) (Aspergillus nidulans).